We begin with the raw amino-acid sequence, 210 residues long: Somatotropin (210 aa).

The first 22 residues, M1–A22, serve as a signal peptide directing secretion. Position 38 (H38) interacts with Zn(2+). C71 and C183 are oxidised to a cystine. E192 provides a ligand contact to Zn(2+). A disulfide bridge links C200 with C208.

This sequence belongs to the somatotropin/prolactin family.

It is found in the secreted. Its function is as follows. Growth hormone plays an important role in growth control and is involved in the regulation of several anabolic processes. Implicated as an osmoregulatory substance important for seawater adaptation. The sequence is that of Somatotropin (gh) from Misgurnus mizolepis (Chinese weatherloach).